Consider the following 85-residue polypeptide: UPF0181 protein YPTS_1774 (85 aa).

The span at 57 to 72 (DHDFDEHTESDYRRDD) shows a compositional bias: basic and acidic residues. The interval 57 to 85 (DHDFDEHTESDYRRDDEPDADDIEDLYEG) is disordered. A compositionally biased stretch (acidic residues) spans 73–85 (EPDADDIEDLYEG).

This sequence belongs to the UPF0181 family.

This chain is UPF0181 protein YPTS_1774, found in Yersinia pseudotuberculosis serotype IB (strain PB1/+).